The primary structure comprises 394 residues: Muscle cell intermediate filament protein AV71 (394 aa).

A coil 1B region spans residues 1–73 (AEINLVRRRV…RVHDQEITEL (73 aa)). The region spanning 1–239 (AEINLVRRRV…KMLEGEENRA (239 aa)) is the IF rod domain. Residues 74-91 (QAMAARDTTPENREYFKN) form a linker 12 region. The segment at 92–239 (ELSSAIRDIR…KMLEGEENRA (148 aa)) is coil 2. Positions 240-394 (GLRQLVEQVV…HIQRSSHTIN (155 aa)) are tail. The region spanning 272–389 (SRTSFQRSAK…EERASHIQRS (118 aa)) is the LTD domain.

The protein belongs to the intermediate filament family.

This is Muscle cell intermediate filament protein AV71 (AV71) from Acanthocheilonema viteae (Filarial nematode worm).